A 491-amino-acid chain; its full sequence is 2,3-bisphosphoglycerate-independent phosphoglycerate mutase (491 aa).

The Mn(2+) site is built by aspartate 11 and serine 61. The active-site Phosphoserine intermediate is the serine 61. Substrate-binding positions include histidine 118, 147 to 148 (RD), arginine 177, arginine 183, 247 to 250 (RNDR), and lysine 320. Aspartate 386, histidine 390, aspartate 427, histidine 428, and histidine 445 together coordinate Mn(2+).

It belongs to the BPG-independent phosphoglycerate mutase family. As to quaternary structure, monomer. Requires Mn(2+) as cofactor.

It carries out the reaction (2R)-2-phosphoglycerate = (2R)-3-phosphoglycerate. The protein operates within carbohydrate degradation; glycolysis; pyruvate from D-glyceraldehyde 3-phosphate: step 3/5. Its function is as follows. Catalyzes the interconversion of 2-phosphoglycerate and 3-phosphoglycerate. This is 2,3-bisphosphoglycerate-independent phosphoglycerate mutase from Helicobacter pylori (strain J99 / ATCC 700824) (Campylobacter pylori J99).